A 185-amino-acid chain; its full sequence is Threonylcarbamoyl-AMP synthase (185 aa).

The 182-residue stretch at S4 to G185 folds into the YrdC-like domain.

Belongs to the SUA5 family. TsaC subfamily.

Its subcellular location is the cytoplasm. It carries out the reaction L-threonine + hydrogencarbonate + ATP = L-threonylcarbamoyladenylate + diphosphate + H2O. In terms of biological role, required for the formation of a threonylcarbamoyl group on adenosine at position 37 (t(6)A37) in tRNAs that read codons beginning with adenine. Catalyzes the conversion of L-threonine, HCO(3)(-)/CO(2) and ATP to give threonylcarbamoyl-AMP (TC-AMP) as the acyladenylate intermediate, with the release of diphosphate. In Pseudomonas syringae pv. syringae (strain B728a), this protein is Threonylcarbamoyl-AMP synthase.